We begin with the raw amino-acid sequence, 209 residues long: NAD-reducing hydrogenase HoxS subunit delta (209 aa).

Tetramer of an alpha and a gamma subunits (flavin-containing dimer), and a delta and a nickel-containing beta subunits (hydrogenase dimer). It depends on [4Fe-4S] cluster as a cofactor. The cofactor is [3Fe-4S] cluster. Requires [2Fe-2S] cluster as cofactor. FMN is required as a cofactor. Ni(2+) serves as cofactor.

Its subcellular location is the cytoplasm. It catalyses the reaction H2 + NAD(+) = NADH + H(+). This is NAD-reducing hydrogenase HoxS subunit delta (hoxY) from Cupriavidus necator (strain ATCC 17699 / DSM 428 / KCTC 22496 / NCIMB 10442 / H16 / Stanier 337) (Ralstonia eutropha).